Here is a 314-residue protein sequence, read N- to C-terminus: Ferrochelatase (314 aa).

Positions 184 and 259 each coordinate Fe cation.

This sequence belongs to the ferrochelatase family.

It is found in the cytoplasm. It catalyses the reaction heme b + 2 H(+) = protoporphyrin IX + Fe(2+). Its pathway is porphyrin-containing compound metabolism; protoheme biosynthesis; protoheme from protoporphyrin-IX: step 1/1. In terms of biological role, catalyzes the ferrous insertion into protoporphyrin IX. The sequence is that of Ferrochelatase from Chlamydia trachomatis serovar D (strain ATCC VR-885 / DSM 19411 / UW-3/Cx).